Here is a 430-residue protein sequence, read N- to C-terminus: Long-chain specific acyl-CoA dehydrogenase, mitochondrial (430 aa).

The N-terminal 30 residues, 1–30 (MAARLLRGSLRFLGGHCAARPLPALRCSHS), are a transit peptide targeting the mitochondrion. Position 42 is an N6-acetyllysine (Lys42). 2 positions are modified to phosphoserine: Ser54 and Ser55. 2 positions are modified to N6-acetyllysine; alternate: Lys66 and Lys81. Residues Lys66 and Lys81 each carry the N6-succinyllysine; alternate modification. 2 positions are modified to N6-acetyllysine: Lys92 and Lys95. Lys165 carries the post-translational modification N6-succinyllysine. FAD contacts are provided by residues 170–179 (IAMTELGAGS) and 203–205 (FIS). Position 179 (Ser179) interacts with substrate. 227–228 (AR) provides a ligand contact to substrate. Lys240 is modified (N6-succinyllysine). 2 positions are modified to N6-acetyllysine; alternate: Lys254 and Lys279. 2 positions are modified to N6-succinyllysine; alternate: Lys254 and Lys279. Substrate-binding positions include Tyr282 and 289 to 292 (PQER). Glu291 serves as the catalytic Proton acceptor. Arg317 is a binding site for FAD. The residue at position 318 (Lys318) is an N6-acetyllysine. Lys322 is modified (N6-acetyllysine; alternate). Lys322 is subject to N6-succinyllysine; alternate. Gln328 is a binding site for FAD. N6-acetyllysine is present on Lys358. Ser362 is subject to Phosphoserine. 385–389 (QLHGG) serves as a coordination point for FAD. Residue 412–413 (GG) coordinates substrate. 414–416 (TNE) is a binding site for FAD.

Belongs to the acyl-CoA dehydrogenase family. As to quaternary structure, homotetramer. FAD is required as a cofactor. In terms of processing, acetylation at Lys-318 and Lys-322 in proximity of the cofactor-binding sites strongly reduces catalytic activity. These sites are deacetylated by SIRT3.

It localises to the mitochondrion matrix. It catalyses the reaction a long-chain 2,3-saturated fatty acyl-CoA + oxidized [electron-transfer flavoprotein] + H(+) = a long-chain (2E)-enoyl-CoA + reduced [electron-transfer flavoprotein]. The catalysed reaction is hexanoyl-CoA + oxidized [electron-transfer flavoprotein] + H(+) = (2E)-hexenoyl-CoA + reduced [electron-transfer flavoprotein]. It carries out the reaction octanoyl-CoA + oxidized [electron-transfer flavoprotein] + H(+) = (2E)-octenoyl-CoA + reduced [electron-transfer flavoprotein]. The enzyme catalyses decanoyl-CoA + oxidized [electron-transfer flavoprotein] + H(+) = (2E)-decenoyl-CoA + reduced [electron-transfer flavoprotein]. It catalyses the reaction dodecanoyl-CoA + oxidized [electron-transfer flavoprotein] + H(+) = (2E)-dodecenoyl-CoA + reduced [electron-transfer flavoprotein]. The catalysed reaction is tetradecanoyl-CoA + oxidized [electron-transfer flavoprotein] + H(+) = (2E)-tetradecenoyl-CoA + reduced [electron-transfer flavoprotein]. It carries out the reaction oxidized [electron-transfer flavoprotein] + hexadecanoyl-CoA + H(+) = (2E)-hexadecenoyl-CoA + reduced [electron-transfer flavoprotein]. The enzyme catalyses octadecanoyl-CoA + oxidized [electron-transfer flavoprotein] + H(+) = (2E)-octadecenoyl-CoA + reduced [electron-transfer flavoprotein]. It catalyses the reaction eicosanoyl-CoA + oxidized [electron-transfer flavoprotein] + H(+) = (2E)-eicosenoyl-CoA + reduced [electron-transfer flavoprotein]. The catalysed reaction is docosanoyl-CoA + oxidized [electron-transfer flavoprotein] + H(+) = (2E)-docosenoyl-CoA + reduced [electron-transfer flavoprotein]. It carries out the reaction tetracosanoyl-CoA + oxidized [electron-transfer flavoprotein] + H(+) = (2E)-tetracosenoyl-CoA + reduced [electron-transfer flavoprotein]. The enzyme catalyses (5E)-tetradecenoyl-CoA + oxidized [electron-transfer flavoprotein] + H(+) = (2E,5E)-tetradecadienoyl-CoA + reduced [electron-transfer flavoprotein]. It catalyses the reaction (5Z)-tetradecenoyl-CoA + oxidized [electron-transfer flavoprotein] + H(+) = (2E,5Z)-tetradecadienoyl-CoA + reduced [electron-transfer flavoprotein]. The catalysed reaction is oxidized [electron-transfer flavoprotein] + (9Z)-octadecenoyl-CoA + H(+) = (2E,9Z)-octadecadienoyl-CoA + reduced [electron-transfer flavoprotein]. Its pathway is lipid metabolism; mitochondrial fatty acid beta-oxidation. Functionally, long-chain specific acyl-CoA dehydrogenase is one of the acyl-CoA dehydrogenases that catalyze the first step of mitochondrial fatty acid beta-oxidation, an aerobic process breaking down fatty acids into acetyl-CoA and allowing the production of energy from fats. The first step of fatty acid beta-oxidation consists in the removal of one hydrogen from C-2 and C-3 of the straight-chain fatty acyl-CoA thioester, resulting in the formation of trans-2-enoyl-CoA. Among the different mitochondrial acyl-CoA dehydrogenases, long-chain specific acyl-CoA dehydrogenase can act on saturated and unsaturated acyl-CoAs with 6 to 24 carbons with a preference for 8 to 18 carbons long primary chains. The protein is Long-chain specific acyl-CoA dehydrogenase, mitochondrial of Macaca fascicularis (Crab-eating macaque).